Reading from the N-terminus, the 123-residue chain is Large ribosomal subunit protein bL12 (123 aa).

Lys-84 is modified (N6-methyllysine). Positions Pro-94–Lys-123 are disordered. A compositionally biased stretch (basic and acidic residues) spans Gly-100 to Glu-115.

The protein belongs to the bacterial ribosomal protein bL12 family. Homodimer. Part of the ribosomal stalk of the 50S ribosomal subunit. Forms a multimeric L10(L12)X complex, where L10 forms an elongated spine to which 2 to 4 L12 dimers bind in a sequential fashion. Binds GTP-bound translation factors.

Seems to be the binding site for several of the factors involved in protein synthesis and appears to be essential for accurate translation. Its function is as follows. Forms part of the ribosomal stalk which helps the ribosome interact with GTP-bound translation factors. Is thus essential for accurate translation. This is Large ribosomal subunit protein bL12 from Halophilic eubacterium NRCC 41227.